A 433-amino-acid chain; its full sequence is GTPase Obg (433 aa).

The Obg domain occupies 1-159; that stretch reads MAITDYCECR…LNVSLEVKYL (159 aa). An OBG-type G domain is found at 160–329; the sequence is ANVGIVGFPN…LLDRVFELYN (170 aa). GTP is bound by residues 166-173, 191-195, 212-215, 282-285, and 310-312; these read GFPNSGKS, FTTLI, DIPG, NKID, and ISA. Mg(2+) is bound by residues S173 and T193. The OCT domain maps to 355–433; it reads TNENNNDPLN…FDGCEFVIND (79 aa).

This sequence belongs to the TRAFAC class OBG-HflX-like GTPase superfamily. OBG GTPase family. As to quaternary structure, monomer. Mg(2+) is required as a cofactor.

It is found in the cytoplasm. Its function is as follows. An essential GTPase which binds GTP, GDP and possibly (p)ppGpp with moderate affinity, with high nucleotide exchange rates and a fairly low GTP hydrolysis rate. Plays a role in control of the cell cycle, stress response, ribosome biogenesis and in those bacteria that undergo differentiation, in morphogenesis control. This is GTPase Obg from Mycoplasma genitalium (strain ATCC 33530 / DSM 19775 / NCTC 10195 / G37) (Mycoplasmoides genitalium).